A 374-amino-acid chain; its full sequence is Heme A synthase (374 aa).

The next 8 helical transmembrane spans lie at 22 to 42 (VAVWLLVCAGMVFAMAIIGAI), 107 to 127 (LWGRLIGVVFLLPFVWFWVRG), 135 to 155 (PTLAGLFLLGGLQGFIGWFMV), 172 to 192 (LHLGMAFLIYAALLKVALGLL), 209 to 229 (AWAALALLGVTIVWGAFVAGI), 265 to 285 (AAVQFVHRWLAVVTALVVLSL), 306 to 326 (AAATVAQVGLGIATLLSVVWI), and 327 to 347 (PLATAHQGGALVLTGLLVWTL). A heme-binding site is contributed by His-271. A heme-binding site is contributed by His-332.

This sequence belongs to the COX15/CtaA family. Type 2 subfamily. In terms of assembly, interacts with CtaB. Requires heme b as cofactor.

The protein localises to the cell membrane. The enzyme catalyses Fe(II)-heme o + 2 A + H2O = Fe(II)-heme a + 2 AH2. Its pathway is porphyrin-containing compound metabolism; heme A biosynthesis; heme A from heme O: step 1/1. Catalyzes the conversion of heme O to heme A by two successive hydroxylations of the methyl group at C8. The first hydroxylation forms heme I, the second hydroxylation results in an unstable dihydroxymethyl group, which spontaneously dehydrates, resulting in the formyl group of heme A. In Rhodospirillum centenum (strain ATCC 51521 / SW), this protein is Heme A synthase.